Reading from the N-terminus, the 298-residue chain is N-acetylmuramic acid 6-phosphate etherase (298 aa).

One can recognise an SIS domain in the interval 55–218 (ITESLRRGGR…STASMVRLGK (164 aa)). Glutamate 83 (proton donor) is an active-site residue. Glutamate 114 is a catalytic residue.

It belongs to the GCKR-like family. MurNAc-6-P etherase subfamily. As to quaternary structure, homodimer.

It carries out the reaction N-acetyl-D-muramate 6-phosphate + H2O = N-acetyl-D-glucosamine 6-phosphate + (R)-lactate. It participates in amino-sugar metabolism; N-acetylmuramate degradation. Functionally, specifically catalyzes the cleavage of the D-lactyl ether substituent of MurNAc 6-phosphate, producing GlcNAc 6-phosphate and D-lactate. In Mycolicibacterium smegmatis (strain ATCC 700084 / mc(2)155) (Mycobacterium smegmatis), this protein is N-acetylmuramic acid 6-phosphate etherase.